A 186-amino-acid chain; its full sequence is Large ribosomal subunit protein bL17 (186 aa).

A disordered region spans residues 123 to 186; that stretch reads SEADRARRVK…ADEAEGSSED (64 aa). Residues 139–177 show a composition bias toward low complexity; that stretch reads EAAAAAPQAAVEPEAVEAAPAPDAPEAAPEAEAAAPQPA.

Belongs to the bacterial ribosomal protein bL17 family. Part of the 50S ribosomal subunit. Contacts protein L32.

This chain is Large ribosomal subunit protein bL17, found in Mycobacterium avium (strain 104).